The following is a 363-amino-acid chain: tRNA N6-adenosine threonylcarbamoyltransferase (363 aa).

Fe cation is bound by residues histidine 121 and histidine 125. Substrate-binding positions include leucine 143–glycine 147, aspartate 176, glycine 189, and asparagine 287. Aspartate 315 serves as a coordination point for Fe cation.

The protein belongs to the KAE1 / TsaD family. Fe(2+) is required as a cofactor.

It localises to the cytoplasm. It carries out the reaction L-threonylcarbamoyladenylate + adenosine(37) in tRNA = N(6)-L-threonylcarbamoyladenosine(37) in tRNA + AMP + H(+). Required for the formation of a threonylcarbamoyl group on adenosine at position 37 (t(6)A37) in tRNAs that read codons beginning with adenine. Is involved in the transfer of the threonylcarbamoyl moiety of threonylcarbamoyl-AMP (TC-AMP) to the N6 group of A37, together with TsaE and TsaB. TsaD likely plays a direct catalytic role in this reaction. In Rhodopseudomonas palustris (strain ATCC BAA-98 / CGA009), this protein is tRNA N6-adenosine threonylcarbamoyltransferase.